Reading from the N-terminus, the 830-residue chain is MAMAMAMPSSSPPLFFSLLNLMLLLLLLAPYCSAVSVPNNNTHHRSSSPTQTTLQQLHSPDSPPPPPLPTPTVTTPTPPPPPPAPRPPRRHHRIPPPPPPLLPTPPPPPASISPTPAPPLPPPPAPAPPPTPTPKFPSSSANPSPPDAYPFTNYPFFPNFAAPPPPTQQQQQQPSGDGGLPTFPANISTLVHPTQRPPRRFPVLQALLLSFLSLCLLLLSALLSLHLFRRLRHRHHSHSHPNARSPSSRSGATNHHHDDDGDGDEEGRRLKPPPMPTSSSNPSTEFLYLGTLAAPPQQPPPTTSHLRPGSPELRPLPPLPRVGPPSGEFASRSSASDPSTAPPAAAEASSSSLSPSSPSASSPTLGSSPVHLRPPSIPQPRGRAPNPSPPKRRPQPPEPMAAHAWNPFVPMPPQAPPSEEEEEHSPSEKSMRKSRPLHSDKLKPGSLHMKDEMIHLYLNNSMAAAMPREVCLLGAPRCHGIGMLVGALGISKEQVREAILEGNAHGLGVEALRMLMQMVLTNEEELKLKYFKDDLSTKLCPVEAFLKAVLDIPFAFKRMDAMLYVANFYLEVNQLRMSYATLEAACQELKNSRLFHKVLEAVLNFGNLMSIDTGSPNSHAMEPNTLLKIVDVKGADGKAALLQFVVHEIVKPEGHSPVCKTNANTTQQYDVEYRKHGLQVVSKLAAELSNTKKASSIDMMKLSRDVSELGVGLGKIHDVLRLNSMVTSADSARRFHNTMSMFLRQAEEEILKLQAQESICLSCVKEVTEYFHGELSSGDEGHMARVFGSVREFLAMLDRICKEAGEEMKSSGWMMGRDWNMAAPMGMTTP.

Positions 1–34 (MAMAMAMPSSSPPLFFSLLNLMLLLLLLAPYCSA) are cleaved as a signal peptide. A compositionally biased stretch (polar residues) spans 40–59 (NNTHHRSSSPTQTTLQQLHS). A disordered region spans residues 40–195 (NNTHHRSSSP…NISTLVHPTQ (156 aa)). Composition is skewed to pro residues over residues 61–86 (DSPP…PAPR) and 95–135 (PPPP…PTPK). Residues 149 to 160 (YPFTNYPFFPNF) are compositionally biased toward low complexity. Residues 203–223 (VLQALLLSFLSLCLLLLSALL) traverse the membrane as a helical segment. The tract at residues 235-446 (HHSHSHPNAR…LHSDKLKPGS (212 aa)) is disordered. The span at 314–323 (RPLPPLPRVG) shows a compositional bias: pro residues. The span at 324–369 (PPSGEFASRSSASDPSTAPPAAAEASSSSLSPSSPSASSPTLGSSP) shows a compositional bias: low complexity. Residues 390 to 823 (PKRRPQPPEP…MMGRDWNMAA (434 aa)) form the FH2 domain. Residues 424–446 (HSPSEKSMRKSRPLHSDKLKPGS) show a composition bias toward basic and acidic residues.

The protein belongs to the formin-like family. Class-I subfamily.

The protein localises to the membrane. In Oryza sativa subsp. japonica (Rice), this protein is Formin-like protein 14 (FH14).